The sequence spans 448 residues: Ribosomal protein uS12 methylthiotransferase RimO (448 aa).

Residues 7–123 (EKVSLVSLGC…IAEIIAEKEG (117 aa)) form the MTTase N-terminal domain. The [4Fe-4S] cluster site is built by cysteine 16, cysteine 52, cysteine 86, cysteine 161, cysteine 165, and cysteine 168. Residues 147 to 377 (SSPYYTAYLK…MRTQARVSFK (231 aa)) form the Radical SAM core domain. The TRAM domain occupies 380–448 (RSLVDTEELV…DYDLIGEIVP (69 aa)).

Belongs to the methylthiotransferase family. RimO subfamily. It depends on [4Fe-4S] cluster as a cofactor.

The protein localises to the cytoplasm. It carries out the reaction L-aspartate(89)-[ribosomal protein uS12]-hydrogen + (sulfur carrier)-SH + AH2 + 2 S-adenosyl-L-methionine = 3-methylsulfanyl-L-aspartate(89)-[ribosomal protein uS12]-hydrogen + (sulfur carrier)-H + 5'-deoxyadenosine + L-methionine + A + S-adenosyl-L-homocysteine + 2 H(+). Its function is as follows. Catalyzes the methylthiolation of an aspartic acid residue of ribosomal protein uS12. The polypeptide is Ribosomal protein uS12 methylthiotransferase RimO (Geotalea uraniireducens (strain Rf4) (Geobacter uraniireducens)).